Reading from the N-terminus, the 265-residue chain is Secreted RxLR effector protein 16 (265 aa).

An N-terminal signal peptide occupies residues 1–19 (MRGAFYIAIALLIVRSRTA). Positions 46 to 61 (RYLRGGLALSATNEER) match the RxLR-dEER motif. N170, N219, and N240 each carry an N-linked (GlcNAc...) asparagine glycan.

The protein belongs to the RxLR effector family. N-glycosylated. The putative N-glycosylation site at position 240 is essential for cell death-inducing activity.

Its subcellular location is the secreted. It localises to the host nucleus. Functionally, effector that acts as an elicitor that induces cell death and promotes ROS accumulation in Nicotian benthamiana. RxLR16-triggered cell death is dependent on SGT1, HSP90 and RAR1, but independent of the somatic embryogenesis receptor-like kinase SERK3/BAK1, indicating that it acts independently of the detection of cell surface pattern recognition receptors. Enhances the expressional levels of defense-associated genes involved in the salicylic acid-, jasmonate acid-, and ethylene-mediated signal transduction, resulting in disease resistance. However, as some other Plasmopara viticola RxLR effectors including RxLR1, RxLR10, RxLR30 and RxLR25, can suppress defense responses and disease resistance induced by RxLR16, it may not trigger host cell death or immune responses during physiological infection under natural conditions. This is Secreted RxLR effector protein 16 from Plasmopara viticola (Downy mildew of grapevine).